We begin with the raw amino-acid sequence, 343 residues long: Phosphate acyltransferase (343 aa).

This sequence belongs to the PlsX family. As to quaternary structure, homodimer. Probably interacts with PlsY.

It is found in the cytoplasm. The enzyme catalyses a fatty acyl-[ACP] + phosphate = an acyl phosphate + holo-[ACP]. Its pathway is lipid metabolism; phospholipid metabolism. Functionally, catalyzes the reversible formation of acyl-phosphate (acyl-PO(4)) from acyl-[acyl-carrier-protein] (acyl-ACP). This enzyme utilizes acyl-ACP as fatty acyl donor, but not acyl-CoA. The sequence is that of Phosphate acyltransferase from Acidovorax sp. (strain JS42).